We begin with the raw amino-acid sequence, 689 residues long: ATP-dependent zinc metalloprotease FtsH 2 (689 aa).

The Cytoplasmic portion of the chain corresponds to 1–3 (MRK). A helical membrane pass occupies residues 4–24 (FFRGASFYILAFIIILFIVQN). The Extracellular portion of the chain corresponds to 25-111 (FGRPTQEIDE…SAAPPPTTPW (87 aa)). A helical transmembrane segment spans residues 112–132 (FIELLPSIFMVLIFIVFWFVF). The Cytoplasmic portion of the chain corresponds to 133–689 (MQQSQGGGNR…QDNEENRKEE (557 aa)). 205 to 212 (GPPGTGKT) is a binding site for ATP. A Zn(2+)-binding site is contributed by H427. Residue E428 is part of the active site. Zn(2+) is bound by residues H431 and D503. Residues 661 to 673 (EELIEVSSDKEEE) are compositionally biased toward basic and acidic residues. A disordered region spans residues 661 to 689 (EELIEVSSDKEEEKDNQDDQDNEENRKEE).

This sequence in the central section; belongs to the AAA ATPase family. In the C-terminal section; belongs to the peptidase M41 family. Homohexamer. It depends on Zn(2+) as a cofactor.

The protein localises to the cell membrane. Functionally, acts as a processive, ATP-dependent zinc metallopeptidase for both cytoplasmic and membrane proteins. Plays a role in the quality control of integral membrane proteins. This Alkaliphilus metalliredigens (strain QYMF) protein is ATP-dependent zinc metalloprotease FtsH 2.